Here is a 557-residue protein sequence, read N- to C-terminus: Formate--tetrahydrofolate ligase 1 (557 aa).

66–73 (TPAGEGKT) contacts ATP.

It belongs to the formate--tetrahydrofolate ligase family.

The enzyme catalyses (6S)-5,6,7,8-tetrahydrofolate + formate + ATP = (6R)-10-formyltetrahydrofolate + ADP + phosphate. It participates in one-carbon metabolism; tetrahydrofolate interconversion. The chain is Formate--tetrahydrofolate ligase 1 from Streptococcus sanguinis (strain SK36).